The following is a 153-amino-acid chain: Prostaglandin E synthase (153 aa).

Residues 1-13 are Lumenal-facing; it reads MPSPGLVMESGQV. The helical transmembrane segment at 14 to 42 threads the bilayer; that stretch reads LPAFLLCSTLLVIKMYAVAVITGQMRLRK. Arg39 contributes to the glutathione binding site. The Cytoplasmic segment spans residues 43 to 61; it reads KAFANPEDALKRGGLQYYR. Residues 62 to 91 traverse the membrane as a helical segment; it reads SDPDVERCLRAHRNDMETIYPFLFLGFVYS. 74–78 contacts glutathione; the sequence is RNDME. At 92–96 the chain is on the lumenal side; that stretch reads FLGPN. A helical membrane pass occupies residues 97 to 120; it reads PLIAWIHFLVVLTGRVVHTVAYLG. His114 and Tyr118 together coordinate glutathione. Residues 121–124 lie on the Cytoplasmic side of the membrane; sequence KLNP. Residues 125–153 form a helical membrane-spanning segment; sequence RLRSGAYVLAQFSCFSMALQILWEVAHHL. Glutathione is bound at residue 127-131; that stretch reads RSGAY.

The protein belongs to the MAPEG family. As to quaternary structure, homotrimer. Glutathione is required as a cofactor.

It is found in the membrane. The protein resides in the cytoplasm. It localises to the perinuclear region. It carries out the reaction prostaglandin H2 = prostaglandin E2. It catalyses the reaction 2-glyceryl-prostaglandin H2 = 2-glyceryl-prostaglandin E2. The enzyme catalyses prostaglandin G2 = (15S)-15-hydroperoxy-prostaglandin E2. The catalysed reaction is 1-chloro-2,4-dinitrobenzene + glutathione = 2,4-dinitrophenyl-S-glutathione + chloride + H(+). It carries out the reaction (5S)-hydroperoxy-(6E,8Z,11Z,14Z)-eicosatetraenoate + 2 glutathione = (5S)-hydroxy-(6E,8Z,11Z,14Z)-eicosatetraenoate + glutathione disulfide + H2O. The protein operates within lipid metabolism; prostaglandin biosynthesis. With respect to regulation, activity is increased markedly in macrophages and osteoblasts following pro-inflammatory stimuli. Functionally, terminal enzyme of the cyclooxygenase (COX)-2-mediated prostaglandin E2 (PGE2) biosynthetic pathway. Catalyzes the glutathione-dependent oxidoreduction of prostaglandin endoperoxide H2 (PGH2) to prostaglandin E2 (PGE2) in response to inflammatory stimuli. Plays a key role in inflammation response, fever and pain. Also catalyzes the oxidoreduction of endocannabinoids into prostaglandin glycerol esters and PGG2 into 15-hydroperoxy-PGE2. In addition, displays low glutathione transferase and glutathione-dependent peroxidase activities, toward 1-chloro-2,4-dinitrobenzene and 5-hydroperoxyicosatetraenoic acid (5-HPETE), respectively. The polypeptide is Prostaglandin E synthase (Ptges) (Mus musculus (Mouse)).